The primary structure comprises 320 residues: Cyclin-H (320 aa).

Ser5 bears the Phosphoserine; by CDK8 mark. Ser132 carries the post-translational modification Phosphoserine. Residue Ser304 is modified to Phosphoserine; by CDK8.

This sequence belongs to the cyclin family. Cyclin C subfamily. As to quaternary structure, associates primarily with CDK7 and MAT1 to form the CAK complex. CAK can further associate with the core-TFIIH to form the TFIIH basal transcription factor.

It is found in the nucleus. In terms of biological role, regulates CDK7, the catalytic subunit of the CDK-activating kinase (CAK) enzymatic complex. CAK activates the cyclin-associated kinases CDK1, CDK2, CDK4 and CDK6 by threonine phosphorylation. CAK complexed to the core-TFIIH basal transcription factor activates RNA polymerase II by serine phosphorylation of the repetitive C-terminal domain (CTD) of its large subunit (POLR2A), allowing its escape from the promoter and elongation of the transcripts. Involved in cell cycle control and in RNA transcription by RNA polymerase II. Its expression and activity are constant throughout the cell cycle. The protein is Cyclin-H (CCNH) of Bos taurus (Bovine).